Consider the following 448-residue polypeptide: MWHWHRFQEHEARRSDAIVLLRKIMSNESKSNSLYAFESLESNVRFYSRSFPVVFEKAAGAILHDESGREFIDFLSGSGVLNYGHNDPYFLDEATQYLRSNGIIHGLDMATPAKREFMECFDAIILRPRGLTYKFQFCGPTGANAVEAALKLARKATGRHSIVSFTNGFHGMSLGALAVTGNRYYRDAAGFPPAGVAFMPYDGYWGADNDTSEYLDKVLADASSGVDVPAAIILETVQGEGGINAARKEWLQSIQRICRSHGILLIVDDIQAGCGRAGNFFSFEFAGLSPDVVVLSKSISGCGLPLSLLLLKPELDVWRPGEHNGTFRGNNLAFVTGAAALRKYWTNDALSARVMETGRIIAERLRQVAQTNRARSLSVRGRGMMLGLNCGTGKLAERIVRKAFEEGLVVERCGAEDQVIKLLPPLTTDEQTLRRGLDILHKSVAASI.

At Lys-297 the chain carries N6-(pyridoxal phosphate)lysine.

Belongs to the class-III pyridoxal-phosphate-dependent aminotransferase family. Pyridoxal 5'-phosphate serves as cofactor.

This is an uncharacterized protein from Sinorhizobium fredii (strain NBRC 101917 / NGR234).